A 452-amino-acid polypeptide reads, in one-letter code: Enolase (452 aa).

Residue Gln167 participates in (2R)-2-phosphoglycerate binding. Residue Glu209 is the Proton donor of the active site. Asp250, Glu307, and Asp334 together coordinate Mg(2+). 4 residues coordinate (2R)-2-phosphoglycerate: Lys359, Arg388, Ser389, and Lys410. Lys359 functions as the Proton acceptor in the catalytic mechanism.

The protein belongs to the enolase family. The cofactor is Mg(2+).

Its subcellular location is the cytoplasm. The protein localises to the secreted. It is found in the cell surface. It carries out the reaction (2R)-2-phosphoglycerate = phosphoenolpyruvate + H2O. Its pathway is carbohydrate degradation; glycolysis; pyruvate from D-glyceraldehyde 3-phosphate: step 4/5. In terms of biological role, catalyzes the reversible conversion of 2-phosphoglycerate (2-PG) into phosphoenolpyruvate (PEP). It is essential for the degradation of carbohydrates via glycolysis. The sequence is that of Enolase from Mesomycoplasma hyopneumoniae (strain 232) (Mycoplasma hyopneumoniae).